Reading from the N-terminus, the 195-residue chain is SXP/RAL-2-like protein 2 (195 aa).

The interval 162-195 (EKVHGGSHGGLRGGPGGPRDGPRGGPRGGPRGGR) is disordered. Residues 167 to 195 (GSHGGLRGGPGGPRDGPRGGPRGGPRGGR) are compositionally biased toward gly residues.

This sequence belongs to the SXP/RAL-2 family.

In Caenorhabditis elegans, this protein is SXP/RAL-2-like protein 2.